An 88-amino-acid polypeptide reads, in one-letter code: Small ribosomal subunit protein uS15 (88 aa).

Belongs to the universal ribosomal protein uS15 family. In terms of assembly, part of the 30S ribosomal subunit. Forms a bridge to the 50S subunit in the 70S ribosome, contacting the 23S rRNA.

In terms of biological role, one of the primary rRNA binding proteins, it binds directly to 16S rRNA where it helps nucleate assembly of the platform of the 30S subunit by binding and bridging several RNA helices of the 16S rRNA. Its function is as follows. Forms an intersubunit bridge (bridge B4) with the 23S rRNA of the 50S subunit in the ribosome. The polypeptide is Small ribosomal subunit protein uS15 (Francisella tularensis subsp. holarctica (strain LVS)).